A 102-amino-acid chain; its full sequence is Small ribosomal subunit protein uS10 (102 aa).

The protein belongs to the universal ribosomal protein uS10 family. In terms of assembly, part of the 30S ribosomal subunit.

Involved in the binding of tRNA to the ribosomes. The protein is Small ribosomal subunit protein uS10 of Streptococcus suis (strain 98HAH33).